The sequence spans 776 residues: Homoaconitase, mitochondrial (776 aa).

Residues 1 to 24 (MVALRRAVALNAVAIARLQTRALT) constitute a mitochondrion transit peptide. Positions 392, 459, and 462 each coordinate [4Fe-4S] cluster.

This sequence belongs to the aconitase/IPM isomerase family. It depends on [4Fe-4S] cluster as a cofactor.

The protein resides in the mitochondrion. It carries out the reaction (2R,3S)-homoisocitrate = cis-homoaconitate + H2O. Its pathway is amino-acid biosynthesis; L-lysine biosynthesis via AAA pathway; L-alpha-aminoadipate from 2-oxoglutarate: step 3/5. Catalyzes the reversible hydration of cis-homoaconitate to (2R,3S)-homoisocitrate, a step in the alpha-aminoadipate pathway for lysine biosynthesis. The polypeptide is Homoaconitase, mitochondrial (LYS4) (Gibberella zeae (strain ATCC MYA-4620 / CBS 123657 / FGSC 9075 / NRRL 31084 / PH-1) (Wheat head blight fungus)).